Consider the following 823-residue polypeptide: Endoplasmin homolog (823 aa).

A signal peptide spans 1-23 (MRKRTLVSVLFLFSLLFLLPDQG). Residues 29–60 (NAEESSDDVTDPPKVEEKIGGHGGLSTDSDVV) are disordered. Positions 39–48 (DPPKVEEKIG) are enriched in basic and acidic residues. ATP-binding positions include E106, N110, D154, M159, N167, K173, 174–175 (SG), 194–199 (QFGVGF), F199, and T246. Residue N110 is glycosylated (N-linked (GlcNAc...) asparagine). The tract at residues 289–328 (ETEVPVEEDESADEETETTSTEEEKEEDAEEEDGEKKQKT) is disordered. The segment covering 290-321 (TEVPVEEDESADEETETTSTEEEKEEDAEEED) has biased composition (acidic residues). N452 and N620 each carry an N-linked (GlcNAc...) asparagine glycan. Residues 777 to 792 (VADEEIEAAEEPETSE) are compositionally biased toward acidic residues. Residues 777-823 (VADEEIEAAEEPETSEATETKSDDLAGGLNIEAEPVEQQEENTKDEL) are disordered. The Prevents secretion from ER motif lies at 820–823 (KDEL).

This sequence belongs to the heat shock protein 90 family. In terms of assembly, interacts with FKBP42. Interacts with P23-1. As to expression, ubiquitous.

The protein localises to the endoplasmic reticulum lumen. Functionally, may have a molecular chaperone role in the processing of secreted materials. Required for shoot apical meristem (SAM), root apical meristem (RAM) and floral meristem (FM) formation, probably by regulating the folding of CLAVATA proteins (CLVs). Also involved in pollen tube elongation. Involved in resistance to tunicamycin- or high calcium-induced ER stresses. Possesses ATPase activity. This chain is Endoplasmin homolog, found in Arabidopsis thaliana (Mouse-ear cress).